The chain runs to 228 residues: Lipoprotein-releasing system ATP-binding protein LolD (228 aa).

Residues 6–228 (IKCINLNKSY…ENNQIFNYES (223 aa)) enclose the ABC transporter domain. 42 to 49 (GKSGSGKT) provides a ligand contact to ATP.

It belongs to the ABC transporter superfamily. Lipoprotein translocase (TC 3.A.1.125) family.

It localises to the cell inner membrane. In terms of biological role, usually LolD forms an ABC transporter complex with LolC and LolE involved in the translocation of lipoprotein, in an ATP-dependent manner. However, LolE is certainly not functional as it is frameshifted. This chain is Lipoprotein-releasing system ATP-binding protein LolD, found in Buchnera aphidicola subsp. Acyrthosiphon pisum (strain APS) (Acyrthosiphon pisum symbiotic bacterium).